The primary structure comprises 214 residues: Pyridoxine/pyridoxamine 5'-phosphate oxidase (214 aa).

Substrate-binding positions include 8–11 (RINY) and Lys66. FMN contacts are provided by residues 61-66 (RIVLIK), 76-77 (FT), Arg82, Lys83, and Gln105. The substrate site is built by Tyr123, Arg127, and Ser131. FMN contacts are provided by residues 140 to 141 (QS) and Trp184. 190–192 (RLH) contributes to the substrate binding site. Arg194 is an FMN binding site.

This sequence belongs to the pyridoxamine 5'-phosphate oxidase family. In terms of assembly, homodimer. FMN is required as a cofactor.

The catalysed reaction is pyridoxamine 5'-phosphate + O2 + H2O = pyridoxal 5'-phosphate + H2O2 + NH4(+). The enzyme catalyses pyridoxine 5'-phosphate + O2 = pyridoxal 5'-phosphate + H2O2. It participates in cofactor metabolism; pyridoxal 5'-phosphate salvage; pyridoxal 5'-phosphate from pyridoxamine 5'-phosphate: step 1/1. The protein operates within cofactor metabolism; pyridoxal 5'-phosphate salvage; pyridoxal 5'-phosphate from pyridoxine 5'-phosphate: step 1/1. In terms of biological role, catalyzes the oxidation of either pyridoxine 5'-phosphate (PNP) or pyridoxamine 5'-phosphate (PMP) into pyridoxal 5'-phosphate (PLP). This chain is Pyridoxine/pyridoxamine 5'-phosphate oxidase, found in Burkholderia ambifaria (strain ATCC BAA-244 / DSM 16087 / CCUG 44356 / LMG 19182 / AMMD) (Burkholderia cepacia (strain AMMD)).